Reading from the N-terminus, the 499-residue chain is Probable malate:quinone oxidoreductase 4 (499 aa).

It belongs to the MQO family. FAD serves as cofactor.

The enzyme catalyses (S)-malate + a quinone = a quinol + oxaloacetate. It functions in the pathway carbohydrate metabolism; tricarboxylic acid cycle; oxaloacetate from (S)-malate (quinone route): step 1/1. The protein is Probable malate:quinone oxidoreductase 4 of Staphylococcus epidermidis (strain ATCC 35984 / DSM 28319 / BCRC 17069 / CCUG 31568 / BM 3577 / RP62A).